We begin with the raw amino-acid sequence, 298 residues long: Probable tRNA(His) guanylyltransferase (298 aa).

3 residues coordinate Mg(2+): Asp-58, Gly-59, and Asp-105. Residues 58-63 (DGRNFH) and 104-105 (SD) each bind GTP.

Belongs to the tRNA(His) guanylyltransferase family. In terms of assembly, homotetramer. Interacts with MFN1 and MFN2; functions as a guanyl-nucleotide exchange factor/GEF for MFN2 and also probably MFN1. Requires Mg(2+) as cofactor.

It localises to the cytoplasm. The protein resides in the mitochondrion. The enzyme catalyses a 5'-end ribonucleotide-tRNA(His) + GTP + ATP + H2O = a 5'-end phospho-guanosine-ribonucleotide-tRNA(His) + AMP + 2 diphosphate + H(+). Adds a GMP to the 5'-end of tRNA(His) after transcription and RNase P cleavage. This step is essential for proper recognition of the tRNA and for the fidelity of protein synthesis. Also functions as a guanyl-nucleotide exchange factor/GEF for the MFN1 and MFN2 mitofusins thereby regulating mitochondrial fusion. By regulating both mitochondrial dynamics and bioenergetic function, it contributes to cell survival following oxidative stress. This is Probable tRNA(His) guanylyltransferase (Thg1l) from Mus musculus (Mouse).